The primary structure comprises 883 residues: MEPTMGGEMESGGGAATGECVNRIPVPRPPSIEEFTIVKPISRGAFGKVYLGQKGNRLYAVKVVKKADMINKNMTHQVQAERDALALSKSPFIVHLYYSLQSANNVYLVMEYLIGGDVKSLLHIYGYFDEEMAVKYISEVALALDYLHRHGIIHRDLKPDNMLISNEGHIKLTDFGLSKVTLNRDIDINMMDILTTPSMAKPRQDYSRTPGQVLSLISSLGFHTPVAEGNHDTANVLSTQVSETSPLSQGLTCPMSVDQKDTTPYSSKLLKSCPEMVASHPRMPVKCLTSHLLQSRKRLATSSTSSPSHTFISSMESECHSSPRWEKDCQESDDAAGSTMMSWNTVEKPLCTKSVDAMETKSFNERDLELALSPIHNSSVVPATGNSYVNLAKKCSSGEVSWEARELDVNNINMTADTSQYCFHESNQRAVDSGGMTEEHLGKRSCKRIFELVDSSPRQGIIPNKKSCFEYECSNEMRDCYATQRTGFAFEVQDLKLLVYRDQQNDCVNKENVGSSFTDKHQTPEKSPVPMIEKNLMCELDDDCDKNSKKDYLSSSFLCSDGDRTPKSIHMDSDSSFPGISIMESPLGGQSLDPDKNIKESSLEESNIEDLLPVSPSCQESTLPKGVECPTIQDSNQKMLAPSSEVLKPLTSKRNAVAFRSFNSHINASNSSEPSKMSITSLDMMDVSCAYSGSYPTAITPTQRERSDMPYQQTPNQVKSETPYRTPKSVRRGAAPVDDGRILGTPDYLAPELLLARAHGPAVDWWALGVCLFEFLTGIPPFNDETPQQVFQNILKRDIPWPEGEEKLSDNAQSAVDILLTIDDTKRAGMKELKHHPLFSGVDWENLQHQKMPFIPQPDDETDTSYFEARNNAQHLTVSGFSL.

Residue M1 is modified to N-acetylmethionine. Residues 1–23 (MEPTMGGEMESGGGAATGECVNR) are disordered. The Protein kinase domain maps to 35–839 (FTIVKPISRG…MKELKHHPLF (805 aa)). ATP is bound by residues 41-49 (ISRGAFGKV) and K62. D156 functions as the Proton acceptor in the catalytic mechanism. Phosphothreonine occurs at positions 209 and 224. At S295 the chain carries Phosphoserine. The tract at residues 298 to 317 (RLATSSTSSPSHTFISSMES) is disordered. Positions 301–314 (TSSTSSPSHTFISS) are enriched in low complexity. 2 positions are modified to phosphoserine: S373 and S456. The disordered stretch occupies residues 511 to 530 (ENVGSSFTDKHQTPEKSPVP). T523 is subject to Phosphothreonine. 2 positions are modified to phosphoserine: S556 and S560. The tract at residues 569–597 (IHMDSDSSFPGISIMESPLGGQSLDPDKN) is disordered. Residues S635, S661, and S672 each carry the phosphoserine modification. The segment at 706 to 737 (RSDMPYQQTPNQVKSETPYRTPKSVRRGAAPV) is disordered. Over residues 710–720 (PYQQTPNQVKS) the composition is skewed to polar residues. T726 bears the Phosphothreonine mark. Residue S729 is modified to Phosphoserine. A Phosphothreonine; by CDK1 modification is found at T745. In terms of domain architecture, AGC-kinase C-terminal spans 840 to 883 (SGVDWENLQHQKMPFIPQPDDETDTSYFEARNNAQHLTVSGFSL). Phosphoserine occurs at positions 879 and 882.

Belongs to the protein kinase superfamily. AGC Ser/Thr protein kinase family. In terms of processing, phosphorylation at Thr-745 by CDK1 during M phase activates its kinase activity. Maximum phosphorylation occurs in prometaphase.

The protein localises to the cytoplasm. It is found in the cytoskeleton. It localises to the microtubule organizing center. The protein resides in the centrosome. Its subcellular location is the nucleus. It carries out the reaction L-seryl-[protein] + ATP = O-phospho-L-seryl-[protein] + ADP + H(+). The enzyme catalyses L-threonyl-[protein] + ATP = O-phospho-L-threonyl-[protein] + ADP + H(+). Its function is as follows. Serine/threonine kinase that plays a key role in M phase by acting as a regulator of mitosis entry and maintenance. Acts by promoting the inactivation of protein phosphatase 2A (PP2A) during M phase: does not directly inhibit PP2A but acts by mediating phosphorylation and subsequent activation of ARPP19 and ENSA at 'Ser-62' and 'Ser-67', respectively. ARPP19 and ENSA are phosphatase inhibitors that specifically inhibit the PPP2R2D (PR55-delta) subunit of PP2A. Inactivation of PP2A during M phase is essential to keep cyclin-B1-CDK1 activity high. Following DNA damage, it is also involved in checkpoint recovery by being inhibited. The sequence is that of Serine/threonine-protein kinase greatwall (MASTL) from Bos taurus (Bovine).